Here is a 125-residue protein sequence, read N- to C-terminus: Plastocyanin (125 aa).

Residues 1-34 (MKVLASFARRLSLFAVAAVLCVGSFFLSAAPASA) form the signal peptide. In terms of domain architecture, Plastocyanin-like spans 35 to 125 (QTVAIKMGAD…AGMVGKIVVQ (91 aa)). Residues histidine 73, cysteine 110, histidine 113, and methionine 118 each contribute to the Cu cation site.

The protein belongs to the plastocyanin family. The cofactor is Cu(2+).

The protein resides in the cellular thylakoid membrane. Participates in electron transfer between P700 and the cytochrome b6-f complex in photosystem I. In Synechococcus elongatus (strain ATCC 33912 / PCC 7942 / FACHB-805) (Anacystis nidulans R2), this protein is Plastocyanin (petE).